Here is a 191-residue protein sequence, read N- to C-terminus: ECF RNA polymerase sigma-E factor (191 aa).

The segment at M1 to G153 is binds RNAP core. The sigma-70 factor domain-2 stretch occupies residues L25–R92. A Polymerase core binding motif is present at residues D48–L61. The sigma-70 factor domain-4 stretch occupies residues Q129–A180. Residues Y156 to F175 constitute a DNA-binding region (H-T-H motif).

It belongs to the sigma-70 factor family. ECF subfamily. Interacts transiently with the RNAP catalytic core formed by RpoA, RpoB, RpoC and RpoZ (2 alpha, 1 beta, 1 beta' and 1 omega subunit) to form the RNAP holoenzyme that can initiate transcription. Interacts 1:1 with anti-sigma-E factor RseA which prevents binding to RNAP catalytic core.

Its subcellular location is the cytoplasm. With respect to regulation, ECF sigma-E is held in an inactive form by its cognate anti-sigma factor (RseA) until released by regulated intramembrane proteolysis (RIP). RIP occurs when an extracytoplasmic signal (periplasmic stress and excess LPS) triggers a concerted proteolytic cascade to transmit information and elicit cellular responses. The anti-sigma factor RseA is an inner membrane protein, binding sigma-E in the cytoplasm and RseB in the periplasm. RseA is first cut extracytoplasmically (site-1 protease, S1P, by DegS), then within the membrane itself (site-2 protease, S2P, by RseP), while cytoplasmic proteases (predominantly ClpX-ClpP) finish degrading the regulatory protein, liberating sigma-E. Degradation of RseA requires 2 signals to activate DegS; an outer membrane protein (OMP) signal activates DegS, while an LPS signal causes release of RseB from RseA, freeing RseA to be cleaved. Functionally, sigma factors are initiation factors that promote the attachment of RNA polymerase (RNAP) to specific initiation sites and are then released. Extracytoplasmic function (ECF) sigma-E controls the envelope stress response, responding to periplasmic protein stress, increased levels of periplasmic lipopolysaccharide (LPS) as well as heat shock and oxidative stress; it controls protein processing in the extracytoplasmic compartment. This chain is ECF RNA polymerase sigma-E factor (rpoE), found in Escherichia coli O157:H7.